A 426-amino-acid polypeptide reads, in one-letter code: 3-phosphoshikimate 1-carboxyvinyltransferase (426 aa).

Residues K22, S23, and R27 each contribute to the 3-phosphoshikimate site. A phosphoenolpyruvate-binding site is contributed by K22. Phosphoenolpyruvate contacts are provided by G96 and R124. 3-phosphoshikimate contacts are provided by S170, S171, Q172, S198, D314, N337, and K341. Q172 contacts phosphoenolpyruvate. The Proton acceptor role is filled by D314. R345, R387, and K412 together coordinate phosphoenolpyruvate.

This sequence belongs to the EPSP synthase family. In terms of assembly, monomer.

The protein localises to the cytoplasm. The catalysed reaction is 3-phosphoshikimate + phosphoenolpyruvate = 5-O-(1-carboxyvinyl)-3-phosphoshikimate + phosphate. It functions in the pathway metabolic intermediate biosynthesis; chorismate biosynthesis; chorismate from D-erythrose 4-phosphate and phosphoenolpyruvate: step 6/7. Its function is as follows. Catalyzes the transfer of the enolpyruvyl moiety of phosphoenolpyruvate (PEP) to the 5-hydroxyl of shikimate-3-phosphate (S3P) to produce enolpyruvyl shikimate-3-phosphate and inorganic phosphate. This is 3-phosphoshikimate 1-carboxyvinyltransferase from Shewanella baltica (strain OS185).